Reading from the N-terminus, the 354-residue chain is Selenide, water dikinase (354 aa).

Sec21 is a catalytic residue. Position 21 (Sec21) is a non-standard amino acid, selenocysteine. Residues Lys24 and 51–53 (TSD) each bind ATP. Asp54 provides a ligand contact to Mg(2+). ATP contacts are provided by residues Asp71, Asp94, and 141-143 (GHT). Residue Asp94 coordinates Mg(2+). Asp229 is a binding site for Mg(2+).

It belongs to the selenophosphate synthase 1 family. Class I subfamily. As to quaternary structure, homodimer. The cofactor is Mg(2+).

The enzyme catalyses hydrogenselenide + ATP + H2O = selenophosphate + AMP + phosphate + 2 H(+). Functionally, synthesizes selenophosphate from selenide and ATP. This chain is Selenide, water dikinase, found in Treponema denticola (strain ATCC 35405 / DSM 14222 / CIP 103919 / JCM 8153 / KCTC 15104).